A 31-amino-acid polypeptide reads, in one-letter code: Photosystem II reaction center protein T (31 aa).

Residues 3–23 (AFSYTLLMALAAVTLFFAVAF) traverse the membrane as a helical segment.

It belongs to the PsbT family. PSII is composed of 1 copy each of membrane proteins PsbA, PsbB, PsbC, PsbD, PsbE, PsbF, PsbH, PsbI, PsbJ, PsbK, PsbL, PsbM, PsbT, PsbX, PsbY, Psb30/Ycf12, peripheral proteins PsbO, CyanoQ (PsbQ), PsbU, PsbV and a large number of cofactors. It forms dimeric complexes.

It localises to the cellular thylakoid membrane. Its function is as follows. Found at the monomer-monomer interface of the photosystem II (PS II) dimer, plays a role in assembly and dimerization of PSII. PSII is a light-driven water plastoquinone oxidoreductase, using light energy to abstract electrons from H(2)O, generating a proton gradient subsequently used for ATP formation. The chain is Photosystem II reaction center protein T from Prochlorococcus marinus (strain MIT 9211).